The chain runs to 60 residues: Temporin-CG1 (60 aa).

The N-terminal stretch at 1–22 is a signal peptide; it reads MFTLKKSLLLLFFLATINLSLC. Positions 23-43 are cleaved as a propeptide — removed in mature form; that stretch reads EQERNAEEERRDDDERNAEVE.

In terms of tissue distribution, expressed by the skin glands.

The protein localises to the secreted. Its function is as follows. Antimicrobial peptide active against a variety of Gram-positive and some Gram-negative bacterial strains. Has antifungal activity against a slime mold isolate. Has weak hemolytic activity against human erythrocytes. This Amolops chunganensis (Chungan torrent frog) protein is Temporin-CG1.